We begin with the raw amino-acid sequence, 84 residues long: uncharacterized protein (84 aa).

This is an uncharacterized protein from Azorhizobium caulinodans (strain ATCC 43989 / DSM 5975 / JCM 20966 / LMG 6465 / NBRC 14845 / NCIMB 13405 / ORS 571).